Here is a 522-residue protein sequence, read N- to C-terminus: Glucose-6-phosphate isomerase (522 aa).

The active-site Proton donor is Glu351. Residues His382 and Lys491 contribute to the active site.

This sequence belongs to the GPI family.

It is found in the cytoplasm. It carries out the reaction alpha-D-glucose 6-phosphate = beta-D-fructose 6-phosphate. It participates in carbohydrate biosynthesis; gluconeogenesis. The protein operates within carbohydrate degradation; glycolysis; D-glyceraldehyde 3-phosphate and glycerone phosphate from D-glucose: step 2/4. In terms of biological role, catalyzes the reversible isomerization of glucose-6-phosphate to fructose-6-phosphate. The polypeptide is Glucose-6-phosphate isomerase (Albidiferax ferrireducens (strain ATCC BAA-621 / DSM 15236 / T118) (Rhodoferax ferrireducens)).